Here is a 295-residue protein sequence, read N- to C-terminus: MSERLSGHTLLISLIATPIRHSLSPKMHNEAFAKLGLDYAYLAFEVGNEELADAVQGIRALGIRGSNVSMPNKQAIIPYLDEISPAAELVGAVNTVVNKDGKGHLVGHVTDGTGAVRALAEEGVDIKDQIITLSGAGGAGTAIAVQLGLDGAKEVRIFNQKDAAFANAEKTVEKINSRTQTKASLTDLADQEAFKKSIAESSIYIDATGVGMKPLEDMSLITDPEVIRPDLVVFDVVYSPAETKLLKFAKEHGAKKAINGLGMMLYQGAEAFKLFTGEDMPVDYIKDLLFNDQDK.

Residues 22–24 and serine 69 each bind shikimate; that span reads SLS. Catalysis depends on lysine 73, which acts as the Proton acceptor. Positions 94 and 111 each coordinate shikimate. Residues 135 to 139 and valine 236 each bind NADP(+); that span reads GAGGA. Tyrosine 238 lines the shikimate pocket. Glycine 260 lines the NADP(+) pocket.

Belongs to the shikimate dehydrogenase family. Homodimer.

The enzyme catalyses shikimate + NADP(+) = 3-dehydroshikimate + NADPH + H(+). Its pathway is metabolic intermediate biosynthesis; chorismate biosynthesis; chorismate from D-erythrose 4-phosphate and phosphoenolpyruvate: step 4/7. In terms of biological role, involved in the biosynthesis of the chorismate, which leads to the biosynthesis of aromatic amino acids. Catalyzes the reversible NADPH linked reduction of 3-dehydroshikimate (DHSA) to yield shikimate (SA). The polypeptide is Shikimate dehydrogenase (NADP(+)) (Streptococcus uberis (strain ATCC BAA-854 / 0140J)).